A 1594-amino-acid polypeptide reads, in one-letter code: NAD-specific glutamate dehydrogenase (1594 aa).

Residue Lys-816 is part of the active site.

The protein belongs to the Glu/Leu/Phe/Val dehydrogenases family. As to quaternary structure, interacts with (unphosphorylated) GarA.

It carries out the reaction L-glutamate + NAD(+) + H2O = 2-oxoglutarate + NH4(+) + NADH + H(+). Activity is inhibited by unphosphorylated GarA. Stimulated by manganese and magnesium. In terms of biological role, catalyzes the reversible conversion of L-glutamate to 2-oxoglutarate. Highly specific for NAD. This is NAD-specific glutamate dehydrogenase (gdh) from Mycolicibacterium smegmatis (strain ATCC 700084 / mc(2)155) (Mycobacterium smegmatis).